A 210-amino-acid polypeptide reads, in one-letter code: LexA repressor (210 aa).

Positions 30 to 50 (RVEIAREIGFKSPNAAEEHLK) form a DNA-binding region, H-T-H motif. Residues Ser127 and Lys164 each act as for autocatalytic cleavage activity in the active site.

It belongs to the peptidase S24 family. Homodimer.

It carries out the reaction Hydrolysis of Ala-|-Gly bond in repressor LexA.. Its function is as follows. Represses a number of genes involved in the response to DNA damage (SOS response), including recA and lexA. In the presence of single-stranded DNA, RecA interacts with LexA causing an autocatalytic cleavage which disrupts the DNA-binding part of LexA, leading to derepression of the SOS regulon and eventually DNA repair. The polypeptide is LexA repressor (Actinobacillus pleuropneumoniae serotype 7 (strain AP76)).